A 386-amino-acid chain; its full sequence is Lipid-A-disaccharide synthase (386 aa).

It belongs to the LpxB family.

It catalyses the reaction a lipid X + a UDP-2-N,3-O-bis[(3R)-3-hydroxyacyl]-alpha-D-glucosamine = a lipid A disaccharide + UDP + H(+). It functions in the pathway bacterial outer membrane biogenesis; LPS lipid A biosynthesis. Condensation of UDP-2,3-diacylglucosamine and 2,3-diacylglucosamine-1-phosphate to form lipid A disaccharide, a precursor of lipid A, a phosphorylated glycolipid that anchors the lipopolysaccharide to the outer membrane of the cell. In Chromohalobacter salexigens (strain ATCC BAA-138 / DSM 3043 / CIP 106854 / NCIMB 13768 / 1H11), this protein is Lipid-A-disaccharide synthase.